A 695-amino-acid chain; its full sequence is NADPH--cytochrome P450 reductase (695 aa).

The Lumenal portion of the chain corresponds to 1-8 (MAQLDTLD). The helical transmembrane segment at 9–31 (LVVLVALLVGSVAYFTKGTYWAV) threads the bilayer. Topologically, residues 32–695 (AKDPYASSGP…SGSYQEDVWS (664 aa)) are cytoplasmic. Positions 66–221 (CVIFYGSQTG…DFLAWKEPMW (156 aa)) constitute a Flavodoxin-like domain. FMN is bound by residues 72-77 (SQTGTA), 123-126 (ATYG), 169-178 (LGNNTYEHYN), and aspartate 204. The FAD-binding FR-type domain occupies 277–538 (HNPFIAPIVE…HVRHSNFKLP (262 aa)). Arginine 296 lines the NADP(+) pocket. FAD contacts are provided by residues 451 to 454 (RYYS), 469 to 471 (TAV), and 486 to 489 (GVTT). Residues threonine 552, 614 to 615 (SR), 620 to 624 (KVYVQ), and glutamate 656 contribute to the NADP(+) site. Tryptophan 694 provides a ligand contact to FAD.

The protein belongs to the NADPH--cytochrome P450 reductase family. This sequence in the N-terminal section; belongs to the flavodoxin family. In the C-terminal section; belongs to the flavoprotein pyridine nucleotide cytochrome reductase family. Requires FAD as cofactor. FMN is required as a cofactor.

The protein resides in the endoplasmic reticulum membrane. It is found in the mitochondrion outer membrane. Its subcellular location is the cell membrane. It catalyses the reaction 2 oxidized [cytochrome P450] + NADPH = 2 reduced [cytochrome P450] + NADP(+) + H(+). This enzyme is required for electron transfer from NADP to cytochrome P450 in microsomes. It can also provide electron transfer to heme oxygenase and cytochrome B5. Involved in ergosterol biosynthesis. The polypeptide is NADPH--cytochrome P450 reductase (Aspergillus oryzae (strain ATCC 42149 / RIB 40) (Yellow koji mold)).